An 874-amino-acid polypeptide reads, in one-letter code: Alanine--tRNA ligase (874 aa).

The Zn(2+) site is built by His562, His566, Cys665, and His669.

This sequence belongs to the class-II aminoacyl-tRNA synthetase family. It depends on Zn(2+) as a cofactor.

It is found in the cytoplasm. The catalysed reaction is tRNA(Ala) + L-alanine + ATP = L-alanyl-tRNA(Ala) + AMP + diphosphate. Catalyzes the attachment of alanine to tRNA(Ala) in a two-step reaction: alanine is first activated by ATP to form Ala-AMP and then transferred to the acceptor end of tRNA(Ala). Also edits incorrectly charged Ser-tRNA(Ala) and Gly-tRNA(Ala) via its editing domain. The chain is Alanine--tRNA ligase from Pseudomonas putida (strain GB-1).